Consider the following 658-residue polypeptide: ATP-dependent zinc metalloprotease FtsH 4 (658 aa).

Residues 1 to 22 (MREPTNRQGSPGPGEPRPPAQG) form a disordered region. The Cytoplasmic segment spans residues 1 to 28 (MREPTNRQGSPGPGEPRPPAQGRPRFPT). Residues 29-49 (WILWVALLALALWNVYTFFWP) form a helical membrane-spanning segment. The Extracellular portion of the chain corresponds to 50–149 (SSGARLNIPY…TVKIDQAGGS (100 aa)). The disordered stretch occupies residues 95-114 (QVLSPGDPVPPGTSPNEIRT). A helical transmembrane segment spans residues 150–170 (VWPSLLATIVPLFLFIGLMVY). Topologically, residues 171-658 (LGRSMSRGQQ…AAPAAAADSV (488 aa)) are cytoplasmic. 243–250 (GPPGTGKT) contributes to the ATP binding site. Zn(2+) is bound at residue His464. Residue Glu465 is part of the active site. Residues His468 and Asp540 each contribute to the Zn(2+) site.

The protein in the central section; belongs to the AAA ATPase family. It in the C-terminal section; belongs to the peptidase M41 family. Homohexamer. The cofactor is Zn(2+).

The protein resides in the cell membrane. Functionally, acts as a processive, ATP-dependent zinc metallopeptidase for both cytoplasmic and membrane proteins. Plays a role in the quality control of integral membrane proteins. This chain is ATP-dependent zinc metalloprotease FtsH 4 (ftsh4), found in Sphaerobacter thermophilus (strain ATCC 49802 / DSM 20745 / KCCM 41009 / NCIMB 13125 / S 6022).